The sequence spans 58 residues: Small ribosomal subunit protein bS21 (58 aa).

Residues 37 to 58 (FYDKPSVKKRAKSKAAAKYRGR) form a disordered region. Over residues 43 to 58 (VKKRAKSKAAAKYRGR) the composition is skewed to basic residues.

This sequence belongs to the bacterial ribosomal protein bS21 family.

The polypeptide is Small ribosomal subunit protein bS21 (rpsU) (Chlamydia muridarum (strain MoPn / Nigg)).